The chain runs to 23 residues: NADP-dependent malic enzyme (23 aa).

This sequence belongs to the malic enzymes family. As to quaternary structure, homotetramer.

It catalyses the reaction (S)-malate + NADP(+) = pyruvate + CO2 + NADPH. The catalysed reaction is oxaloacetate + H(+) = pyruvate + CO2. The chain is NADP-dependent malic enzyme from Populus euphratica (Euphrates poplar).